The chain runs to 614 residues: Male-specific lethal 1 homolog (614 aa).

2 disordered regions span residues 1-127 (MTMR…GCSP) and 147-217 (KEPT…GASS). A phosphoserine mark is found at Ser66 and Ser126. Residues 158-169 (GAASPAATASDP) show a composition bias toward low complexity. Over residues 170–184 (AGPPPLPLPGPPPLA) the composition is skewed to pro residues. The segment covering 185-194 (PTATAGTLAA) has biased composition (low complexity). Phosphoserine is present on Ser205. Residues 213-282 (SGASSQAACL…KDNEKERHKL (70 aa)) are a coiled coil. Residues 223–237 (KQILLLQLDLIEQQQ) are interaction with MSL2. Basic and acidic residues-rich tracts occupy residues 272-281 (KKDNEKERHK) and 294-304 (TELSEKIKLEC). Positions 272–420 (KKDNEKERHK…PKEKAFSSEI (149 aa)) are disordered. A Glycyl lysine isopeptide (Lys-Gly) (interchain with G-Cter in SUMO2) cross-link involves residue Lys301. A Nuclear localization signal motif is present at residues 317-346 (PKPFSCGRSGKGHKRKSPFGSTERKTPVKK). The residue at position 353 (Lys353) is an N6-acetyllysine. Residues Lys365 and Lys378 each participate in a glycyl lysine isopeptide (Lys-Gly) (interchain with G-Cter in SUMO2) cross-link. A compositionally biased stretch (basic and acidic residues) spans 376–392 (VCKRELRSQETPEKPRS). Ser393 is modified (phosphoserine). Polar residues predominate over residues 393 to 407 (SVDTPPRLSTPQKGP). Thr396 is modified (phosphothreonine). Ser442 carries the phosphoserine modification. The 120-residue stretch at 472–591 (VLAVPSWRDH…LTPQNFELPW (120 aa)) folds into the PEHE domain. Residues 496–514 (ENLDDSVFSKRHAKLELDE) form an interaction with KAT8 HAT domain region. A Bipartite nuclear localization signal motif is present at residues 505–519 (KRHAKLELDEKRRKR). The sufficient for interaction with MSL3 MRG domain stretch occupies residues 550-591 (EVTSFFPEPDDVESLMITPFLPVVAFGRPLPKLTPQNFELPW).

This sequence belongs to the msl-1 family. In terms of assembly, component of a multisubunit histone acetyltransferase complex (MSL) at least composed of the KAT8/MOF/MYST1, MSL1/hampin, MSL2 and MSL3. Forms a MSL heterotetrameric core with MSL2. Interacts (via PEHE domain) with KAT8 (via HAT domain) and MSL3 (via MRG domain); both interactions are direct. Directly interacts with NUPR1. Interacts with TP53BP1; this interaction may be required for MSL1 DNA repair activity, but not for histone acetyltransferase activity. Interacts with TTC4, ECM2 and PIHD1. Post-translationally, sumoylated with SUMO1.

The protein resides in the nucleus. It localises to the nucleoplasm. Its subcellular location is the nucleus speckle. Its function is as follows. Non-catalytic component of the MSL histone acetyltransferase complex, a multiprotein complex that mediates the majority of histone H4 acetylation at 'Lys-16' (H4K16ac), an epigenetic mark that prevents chromatin compaction. The MSL complex is required for chromosome stability and genome integrity by maintaining homeostatic levels of H4K16ac. The MSL complex is also involved in gene dosage by promoting up-regulation of genes expressed by the X chromosome. X up-regulation is required to compensate for autosomal biallelic expression. The MSL complex also participates in gene dosage compensation by promoting expression of Tsix non-coding RNA. Within the MSL complex, acts as a scaffold to tether MSL3 and KAT8 together for enzymatic activity regulation. Greatly enhances MSL2 E3 ubiquitin ligase activity, promoting monoubiquitination of histone H2B at 'Lys-34' (H2BK34Ub). This modification in turn stimulates histone H3 methylation at 'Lys-4' (H3K4me) and 'Lys-79' (H3K79me) and leads to gene activation, including that of HOXA9 and MEIS1. This is Male-specific lethal 1 homolog from Homo sapiens (Human).